Reading from the N-terminus, the 451-residue chain is L-seryl-tRNA(Sec) selenium transferase (451 aa).

Lysine 286 carries the post-translational modification N6-(pyridoxal phosphate)lysine.

The protein belongs to the SelA family. Pyridoxal 5'-phosphate serves as cofactor.

The protein localises to the cytoplasm. The enzyme catalyses L-seryl-tRNA(Sec) + selenophosphate + H(+) = L-selenocysteinyl-tRNA(Sec) + phosphate. Its pathway is aminoacyl-tRNA biosynthesis; selenocysteinyl-tRNA(Sec) biosynthesis; selenocysteinyl-tRNA(Sec) from L-seryl-tRNA(Sec) (bacterial route): step 1/1. Converts seryl-tRNA(Sec) to selenocysteinyl-tRNA(Sec) required for selenoprotein biosynthesis. The protein is L-seryl-tRNA(Sec) selenium transferase of Aliarcobacter butzleri (strain RM4018) (Arcobacter butzleri).